The sequence spans 261 residues: 5'-nucleotidase SurE (261 aa).

The a divalent metal cation site is built by Asp8, Asp9, Ser39, and Asn91.

The protein belongs to the SurE nucleotidase family. Requires a divalent metal cation as cofactor.

It localises to the cytoplasm. It carries out the reaction a ribonucleoside 5'-phosphate + H2O = a ribonucleoside + phosphate. In terms of biological role, nucleotidase that shows phosphatase activity on nucleoside 5'-monophosphates. This is 5'-nucleotidase SurE from Polaromonas naphthalenivorans (strain CJ2).